A 297-amino-acid chain; its full sequence is Probable transcription factor vicR (297 aa).

Disordered stretches follow at residues 45 to 80 (LPGL…HSET) and 100 to 134 (TNQA…KNVH). The span at 58-67 (QKEEMRRKNA) shows a compositional bias: basic and acidic residues. Polar residues predominate over residues 69-80 (AQMQNDSNHSET). Residues 110–124 (RSREDITNSRAERHS) are compositionally biased toward basic and acidic residues.

Its subcellular location is the nucleus. Functionally, probable transcription factor; part of the gene cluster that mediates the biosynthesis of the secondary metabolite victorin, the molecular basis for Victoria blight of oats. May play a role in the regulation of the production of victorin. The sequence is that of Probable transcription factor vicR from Bipolaris victoriae (strain FI3) (Victoria blight of oats agent).